The primary structure comprises 173 residues: Large ribosomal subunit protein uL16 (173 aa).

It belongs to the universal ribosomal protein uL16 family.

The chain is Large ribosomal subunit protein uL16 from Methanosphaerula palustris (strain ATCC BAA-1556 / DSM 19958 / E1-9c).